The sequence spans 567 residues: Multidrug transporter TPO1_1 (567 aa).

Positions 1-71 (MVEEISPKYT…NRRMSRILTG (71 aa)) are disordered. Residue asparagine 120 is glycosylated (N-linked (GlcNAc...) asparagine). The next 12 membrane-spanning stretches (helical) occupy residues 128–148 (IICI…SIFA), 157–177 (IYHV…FGFA), 194–214 (GVLV…ATSK), 224–244 (FFGG…FADM), 253–273 (AICL…VMGS), 283–303 (WLEY…ALTF), 358–378 (PLLL…YLML), 396–416 (ELPY…LWYF), 436–456 (LIPM…FCWT), 471–491 (AGSF…NYII), 498–520 (AASA…PLFA), and 531–551 (WAGL…LFFL).

This sequence belongs to the major facilitator superfamily. DHA1 family. Polyamines/proton antiporter (TC 2.A.1.2.16) subfamily.

The protein resides in the cell membrane. Functionally, multidrug resistance transporter involved in resistance to azole antifungal drugs such as the imidazoles miconazole, ketoconazole, and tioconazole; as well as the triazoles itraconazole and fluconazole. Also plays a role in the resistance to other antifungal drug families such as the polyene amphotericin B, the pyrimide analog flucytosine, the fungicide mancozeb, and the polyamine spermine. Decreases the intracellular accumulation of clotrimazole by mediating its extrusion from cells. Involved in virulence by conferring resistance to the human antimicrobial peptide histatin-5. This is Multidrug transporter TPO1_1 from Candida glabrata (strain ATCC 2001 / BCRC 20586 / JCM 3761 / NBRC 0622 / NRRL Y-65 / CBS 138) (Yeast).